Consider the following 98-residue polypeptide: UPF0251 protein Sbal_3699 (98 aa).

Belongs to the UPF0251 family.

This is UPF0251 protein Sbal_3699 from Shewanella baltica (strain OS155 / ATCC BAA-1091).